The primary structure comprises 239 residues: Orotidine 5'-phosphate decarboxylase (239 aa).

Residues Asp-15, Lys-37, 64–73 (DLKFHDIPNT), Thr-126, Arg-187, Gln-196, Gly-216, and Arg-217 contribute to the substrate site. Lys-66 acts as the Proton donor in catalysis.

The protein belongs to the OMP decarboxylase family. Type 1 subfamily. As to quaternary structure, homodimer.

The catalysed reaction is orotidine 5'-phosphate + H(+) = UMP + CO2. Its pathway is pyrimidine metabolism; UMP biosynthesis via de novo pathway; UMP from orotate: step 2/2. Catalyzes the decarboxylation of orotidine 5'-monophosphate (OMP) to uridine 5'-monophosphate (UMP). The protein is Orotidine 5'-phosphate decarboxylase of Geobacter sulfurreducens (strain ATCC 51573 / DSM 12127 / PCA).